The sequence spans 419 residues: Adenylosuccinate synthetase (419 aa).

Residues 15 to 21 (GDEGKGK) and 43 to 45 (GHT) contribute to the GTP site. Asp-16 acts as the Proton acceptor in catalysis. Mg(2+) is bound by residues Asp-16 and Gly-43. Residues 16-19 (DEGK), 41-44 (NAGH), Thr-128, Arg-142, Gln-223, Thr-238, and Arg-302 each bind IMP. His-44 functions as the Proton donor in the catalytic mechanism. 298–304 (TTTGRAR) provides a ligand contact to substrate. Residues Arg-304, 330-332 (KLD), and 408-410 (STS) contribute to the GTP site.

The protein belongs to the adenylosuccinate synthetase family. Homodimer. Mg(2+) is required as a cofactor.

Its subcellular location is the cytoplasm. It catalyses the reaction IMP + L-aspartate + GTP = N(6)-(1,2-dicarboxyethyl)-AMP + GDP + phosphate + 2 H(+). The protein operates within purine metabolism; AMP biosynthesis via de novo pathway; AMP from IMP: step 1/2. Functionally, plays an important role in the de novo pathway of purine nucleotide biosynthesis. Catalyzes the first committed step in the biosynthesis of AMP from IMP. The chain is Adenylosuccinate synthetase from Sulfurimonas denitrificans (strain ATCC 33889 / DSM 1251) (Thiomicrospira denitrificans (strain ATCC 33889 / DSM 1251)).